A 527-amino-acid chain; its full sequence is Peptide chain release factor 3 (527 aa).

The 269-residue stretch at 9-277 folds into the tr-type G domain; it reads AKRRTFAIIS…AVVDWAPRPL (269 aa). GTP-binding positions include 18 to 25, 86 to 90, and 140 to 143; these read SHPDAGKT, DTPGH, and NKLD.

Belongs to the TRAFAC class translation factor GTPase superfamily. Classic translation factor GTPase family. PrfC subfamily.

Its subcellular location is the cytoplasm. Increases the formation of ribosomal termination complexes and stimulates activities of RF-1 and RF-2. It binds guanine nucleotides and has strong preference for UGA stop codons. It may interact directly with the ribosome. The stimulation of RF-1 and RF-2 is significantly reduced by GTP and GDP, but not by GMP. The sequence is that of Peptide chain release factor 3 from Ectopseudomonas mendocina (strain ymp) (Pseudomonas mendocina).